Consider the following 93-residue polypeptide: Large ribosomal subunit protein uL23 (93 aa).

The protein belongs to the universal ribosomal protein uL23 family. As to quaternary structure, part of the 50S ribosomal subunit. Contacts protein L29, and trigger factor when it is bound to the ribosome.

One of the early assembly proteins it binds 23S rRNA. One of the proteins that surrounds the polypeptide exit tunnel on the outside of the ribosome. Forms the main docking site for trigger factor binding to the ribosome. The sequence is that of Large ribosomal subunit protein uL23 from Opitutus terrae (strain DSM 11246 / JCM 15787 / PB90-1).